Here is a 303-residue protein sequence, read N- to C-terminus: Methionyl-tRNA formyltransferase (303 aa).

A (6S)-5,6,7,8-tetrahydrofolate-binding site is contributed by 108–111; the sequence is SDLP.

The protein belongs to the Fmt family.

It catalyses the reaction L-methionyl-tRNA(fMet) + (6R)-10-formyltetrahydrofolate = N-formyl-L-methionyl-tRNA(fMet) + (6S)-5,6,7,8-tetrahydrofolate + H(+). Its function is as follows. Attaches a formyl group to the free amino group of methionyl-tRNA(fMet). The formyl group appears to play a dual role in the initiator identity of N-formylmethionyl-tRNA by promoting its recognition by IF2 and preventing the misappropriation of this tRNA by the elongation apparatus. The protein is Methionyl-tRNA formyltransferase of Rickettsia canadensis (strain McKiel).